The chain runs to 225 residues: Ribosomal RNA small subunit methyltransferase G (225 aa).

Residues Gly-84, Phe-89, Asp-107–Thr-109, Ala-135–Glu-136, and Arg-154 each bind S-adenosyl-L-methionine.

This sequence belongs to the methyltransferase superfamily. RNA methyltransferase RsmG family.

It is found in the cytoplasm. Its function is as follows. Specifically methylates the N7 position of a guanine in 16S rRNA. The polypeptide is Ribosomal RNA small subunit methyltransferase G (Microcystis aeruginosa (strain NIES-843 / IAM M-2473)).